Here is a 470-residue protein sequence, read N- to C-terminus: Peripherin (470 aa).

A head region spans residues 1–99; it reads MSHHPSGLRA…FLATRSNEKQ (99 aa). Tyr-17 carries the post-translational modification 3'-nitrotyrosine. Ser-28, Ser-50, and Ser-59 each carry phosphoserine. Residues 97–407 form the IF rod domain; it reads EKQELQELND…KLLEGEESRI (311 aa). A coil 1A region spans residues 100–132; it reads ELQELNDRFANFIEKVRFLEQQNAALRGELSQA. Residues 133 to 143 are linker 1; sequence RGQEPARADQL. The tract at residues 144-239 is coil 1B; that stretch reads CQQELRELRR…KLHEEELRDL (96 aa). Positions 240–262 are linker 2; sequence QVSVESQQVQQVEVEATVKPELT. The segment at 263-405 is coil 2; sequence AALRDIRAQY…YRKLLEGEES (143 aa). At Tyr-379 the chain carries 3'-nitrotyrosine. Residues 406 to 470 form a tail region; it reads RISVPVHSFA…ELDKSSAHSY (65 aa). A disordered region spans residues 447–470; that stretch reads NGEVVTESQKEQRSELDKSSAHSY. A compositionally biased stretch (basic and acidic residues) spans 454 to 470; it reads SQKEQRSELDKSSAHSY. Tyr-470 carries the phosphotyrosine modification.

Belongs to the intermediate filament family. Forms homodimers (in vitro). Homopolymerizes into a filamentous network (in vitro). Forms heterodimers with NEFL, NEFM or NEFH (in vitro). Interacts with DST (via C-terminus). Interacts with RAB7A; the interaction is direct. Interacts with PRKCE (via phorbol-ester/DAG-type 2 domain). Phosphorylated; phosphorylation increases after nerve injury in regenerating neurons. As to expression, expressed in the neurons of the outer hair cells in the organ of Corti and to a lesser extent in type I spiral ganglion cells.

The protein resides in the cytoplasm. Its subcellular location is the cytoskeleton. The protein localises to the cell projection. It localises to the axon. It is found in the perikaryon. In terms of biological role, class-III neuronal intermediate filament protein. May form an independent structural network without the involvement of other neurofilaments or may cooperate with the neuronal intermediate filament proteins NEFL, NEFH, NEFM and INA to form a filamentous network. Assembly of the neuronal intermediate filaments may be regulated by RAB7A. Plays a role in the development of unmyelinated sensory neurons. May be involved in axon elongation and axon regeneration after injury. Inhibits neurite extension in type II spiral ganglion neurons in the cochlea. The chain is Peripherin (PRPH) from Homo sapiens (Human).